The chain runs to 123 residues: MKDNNIKLSLLMKSVEQPLMKTELPEIKVGDTIRLGLLVKEGSKTREQLCEGVVLSRKKRKSLNTSLTLRCSFQGVGVERVFFLNSPRVTFVKVIRRAKVRRAKLYYLRDLLGKASRLKQIFN.

It belongs to the bacterial ribosomal protein bL19 family.

The protein localises to the plastid. It localises to the chloroplast. The protein is Large ribosomal subunit protein bL19c (rpl19) of Porphyra purpurea (Red seaweed).